We begin with the raw amino-acid sequence, 99 residues long: Transmembrane protein 14A (99 aa).

3 helical membrane-spanning segments follow: residues 1-21 (MDLI…LGYK), 24-44 (GGVP…YGAY), and 79-99 (PAGL…LLLL).

The protein belongs to the TMEM14 family.

It is found in the mitochondrion membrane. The protein localises to the endoplasmic reticulum membrane. Inhibits apoptosis via negative regulation of the mitochondrial outer membrane permeabilization involved in apoptotic signaling pathway. The sequence is that of Transmembrane protein 14A (Tmem14a) from Mus musculus (Mouse).